Here is a 420-residue protein sequence, read N- to C-terminus: Tryptophan--tRNA ligase (420 aa).

The 'HIGH' region signature appears at 72-80; sequence PSGLPHFGH. The short motif at 308-312 is the 'KMSKS' region element; sequence KMSSS.

Belongs to the class-I aminoacyl-tRNA synthetase family.

It is found in the cytoplasm. The catalysed reaction is tRNA(Trp) + L-tryptophan + ATP = L-tryptophyl-tRNA(Trp) + AMP + diphosphate + H(+). The sequence is that of Tryptophan--tRNA ligase from Archaeoglobus fulgidus (strain ATCC 49558 / DSM 4304 / JCM 9628 / NBRC 100126 / VC-16).